Consider the following 353-residue polypeptide: Holliday junction branch migration complex subunit RuvB (353 aa).

The interval 4-185 (ADRLITATGG…FGIVQRLEFY (182 aa)) is large ATPase domain (RuvB-L). ATP-binding positions include isoleucine 24, arginine 25, glycine 66, lysine 69, threonine 70, threonine 71, 132 to 134 (EDF), arginine 175, tyrosine 185, and arginine 222. Residue threonine 70 participates in Mg(2+) binding. The tract at residues 186–256 (NIADLSTIVS…TADKALNLLD (71 aa)) is small ATPAse domain (RuvB-S). The head domain (RuvB-H) stretch occupies residues 259–353 (EHGFDHQDRR…DDFGDEPVDL (95 aa)). DNA contacts are provided by arginine 295, arginine 314, and arginine 319.

It belongs to the RuvB family. Homohexamer. Forms an RuvA(8)-RuvB(12)-Holliday junction (HJ) complex. HJ DNA is sandwiched between 2 RuvA tetramers; dsDNA enters through RuvA and exits via RuvB. An RuvB hexamer assembles on each DNA strand where it exits the tetramer. Each RuvB hexamer is contacted by two RuvA subunits (via domain III) on 2 adjacent RuvB subunits; this complex drives branch migration. In the full resolvosome a probable DNA-RuvA(4)-RuvB(12)-RuvC(2) complex forms which resolves the HJ.

It localises to the cytoplasm. The enzyme catalyses ATP + H2O = ADP + phosphate + H(+). Functionally, the RuvA-RuvB-RuvC complex processes Holliday junction (HJ) DNA during genetic recombination and DNA repair, while the RuvA-RuvB complex plays an important role in the rescue of blocked DNA replication forks via replication fork reversal (RFR). RuvA specifically binds to HJ cruciform DNA, conferring on it an open structure. The RuvB hexamer acts as an ATP-dependent pump, pulling dsDNA into and through the RuvAB complex. RuvB forms 2 homohexamers on either side of HJ DNA bound by 1 or 2 RuvA tetramers; 4 subunits per hexamer contact DNA at a time. Coordinated motions by a converter formed by DNA-disengaged RuvB subunits stimulates ATP hydrolysis and nucleotide exchange. Immobilization of the converter enables RuvB to convert the ATP-contained energy into a lever motion, pulling 2 nucleotides of DNA out of the RuvA tetramer per ATP hydrolyzed, thus driving DNA branch migration. The RuvB motors rotate together with the DNA substrate, which together with the progressing nucleotide cycle form the mechanistic basis for DNA recombination by continuous HJ branch migration. Branch migration allows RuvC to scan DNA until it finds its consensus sequence, where it cleaves and resolves cruciform DNA. This is Holliday junction branch migration complex subunit RuvB from Pseudomonas syringae pv. syringae (strain B728a).